The following is a 48-amino-acid chain: MQVGFVSQTNCRSFPACIVFLFQMSQRQRSFNANLRVFKSKCKKIYIG.

The transit peptide at 1–28 directs the protein to the mitochondrion; that stretch reads MQVGFVSQTNCRSFPACIVFLFQMSQRQ.

Its subcellular location is the mitochondrion. In Saccharomyces cerevisiae (strain ATCC 204508 / S288c) (Baker's yeast), this protein is 2-deoxy-glucose resistant protein 1, mitochondrial (DGR1).